The sequence spans 193 residues: dTTP/UTP pyrophosphatase (193 aa).

The Proton acceptor role is filled by D73.

It belongs to the Maf family. YhdE subfamily. A divalent metal cation is required as a cofactor.

The protein resides in the cytoplasm. It catalyses the reaction dTTP + H2O = dTMP + diphosphate + H(+). The catalysed reaction is UTP + H2O = UMP + diphosphate + H(+). In terms of biological role, nucleoside triphosphate pyrophosphatase that hydrolyzes dTTP and UTP. May have a dual role in cell division arrest and in preventing the incorporation of modified nucleotides into cellular nucleic acids. In Caulobacter vibrioides (strain ATCC 19089 / CIP 103742 / CB 15) (Caulobacter crescentus), this protein is dTTP/UTP pyrophosphatase.